The following is a 353-amino-acid chain: UPF0283 membrane protein YcjF (353 aa).

Residues 1–19 (MSEPLKPRIDFAEPLKEEP) show a composition bias toward basic and acidic residues. The interval 1-35 (MSEPLKPRIDFAEPLKEEPTSAFKAQQTFSEAESR) is disordered. 3 consecutive transmembrane segments (helical) span residues 70-90 (MVMGGLALFGASVVGQGVQWT), 100-120 (VALGGCAAGALIIGAGVGSVV), and 213-233 (ESTLMIVVSPLALVDMAFIAW).

Belongs to the UPF0283 family.

The protein resides in the cell inner membrane. This is UPF0283 membrane protein YcjF from Salmonella newport (strain SL254).